Consider the following 340-residue polypeptide: tRNA N6-adenosine threonylcarbamoyltransferase (340 aa).

His-111 and His-115 together coordinate Fe cation. Substrate is bound by residues 134-138, Asp-167, Gly-180, and Asn-276; that span reads LVSGG. Asp-304 contacts Fe cation.

The protein belongs to the KAE1 / TsaD family. The cofactor is Fe(2+).

Its subcellular location is the cytoplasm. The catalysed reaction is L-threonylcarbamoyladenylate + adenosine(37) in tRNA = N(6)-L-threonylcarbamoyladenosine(37) in tRNA + AMP + H(+). Required for the formation of a threonylcarbamoyl group on adenosine at position 37 (t(6)A37) in tRNAs that read codons beginning with adenine. Is involved in the transfer of the threonylcarbamoyl moiety of threonylcarbamoyl-AMP (TC-AMP) to the N6 group of A37, together with TsaE and TsaB. TsaD likely plays a direct catalytic role in this reaction. This chain is tRNA N6-adenosine threonylcarbamoyltransferase, found in Helicobacter pylori (strain P12).